A 282-amino-acid chain; its full sequence is 4-hydroxy-3-methylbut-2-enyl diphosphate reductase (282 aa).

Cys12 is a [4Fe-4S] cluster binding site. Residues His40 and His72 each contribute to the (2E)-4-hydroxy-3-methylbut-2-enyl diphosphate site. The dimethylallyl diphosphate site is built by His40 and His72. The isopentenyl diphosphate site is built by His40 and His72. Cys94 provides a ligand contact to [4Fe-4S] cluster. His122 serves as a coordination point for (2E)-4-hydroxy-3-methylbut-2-enyl diphosphate. Residue His122 coordinates dimethylallyl diphosphate. Residue His122 participates in isopentenyl diphosphate binding. Glu124 (proton donor) is an active-site residue. Thr160 is a (2E)-4-hydroxy-3-methylbut-2-enyl diphosphate binding site. Cys188 is a [4Fe-4S] cluster binding site. Residues Ser216, Asn218, and Ser260 each coordinate (2E)-4-hydroxy-3-methylbut-2-enyl diphosphate. Residues Ser216, Asn218, and Ser260 each coordinate dimethylallyl diphosphate. Isopentenyl diphosphate is bound by residues Ser216, Asn218, and Ser260.

Belongs to the IspH family. [4Fe-4S] cluster serves as cofactor.

It carries out the reaction isopentenyl diphosphate + 2 oxidized [2Fe-2S]-[ferredoxin] + H2O = (2E)-4-hydroxy-3-methylbut-2-enyl diphosphate + 2 reduced [2Fe-2S]-[ferredoxin] + 2 H(+). It catalyses the reaction dimethylallyl diphosphate + 2 oxidized [2Fe-2S]-[ferredoxin] + H2O = (2E)-4-hydroxy-3-methylbut-2-enyl diphosphate + 2 reduced [2Fe-2S]-[ferredoxin] + 2 H(+). It functions in the pathway isoprenoid biosynthesis; dimethylallyl diphosphate biosynthesis; dimethylallyl diphosphate from (2E)-4-hydroxy-3-methylbutenyl diphosphate: step 1/1. The protein operates within isoprenoid biosynthesis; isopentenyl diphosphate biosynthesis via DXP pathway; isopentenyl diphosphate from 1-deoxy-D-xylulose 5-phosphate: step 6/6. In terms of biological role, catalyzes the conversion of 1-hydroxy-2-methyl-2-(E)-butenyl 4-diphosphate (HMBPP) into a mixture of isopentenyl diphosphate (IPP) and dimethylallyl diphosphate (DMAPP). Acts in the terminal step of the DOXP/MEP pathway for isoprenoid precursor biosynthesis. This chain is 4-hydroxy-3-methylbut-2-enyl diphosphate reductase, found in Geobacter metallireducens (strain ATCC 53774 / DSM 7210 / GS-15).